We begin with the raw amino-acid sequence, 148 residues long: uncharacterized protein (148 aa).

4 residues coordinate [4Fe-4S] cluster: Cys-21, Cys-24, Cys-88, and Cys-117.

Belongs to the complex I 20 kDa subunit family. [4Fe-4S] cluster serves as cofactor.

This is an uncharacterized protein from Methanocaldococcus jannaschii (strain ATCC 43067 / DSM 2661 / JAL-1 / JCM 10045 / NBRC 100440) (Methanococcus jannaschii).